Here is a 120-residue protein sequence, read N- to C-terminus: MTGERIEKVKINDEFAKSHFLTTQWRETKRQRHYKMPVTEQGLRERIESAIPQVYHIIVTDLSYGCGQSFDIVVVSDFFQGKSKLMRSRAVNKAVKEELQEIHAFSCKCYTEEEWSKIVV.

Belongs to the BolA/IbaG family. Interacts with FRA1, GRX3 and GRX4.

The protein localises to the cytoplasm. The protein resides in the nucleus. In terms of biological role, involved in the regulation of the iron regulon in response to decreased mitochondrial iron-sulfur cluster synthesis. May be involved in mitochondrial organization and biogenesis. The chain is BolA-like protein 2 (BOL2) from Saccharomyces cerevisiae (strain ATCC 204508 / S288c) (Baker's yeast).